Here is a 491-residue protein sequence, read N- to C-terminus: (R)-citramalate synthase CimA (491 aa).

Positions 3-254 (VRIFDTTLRD…DTKIKMEKLY (252 aa)) constitute a Pyruvate carboxyltransferase domain.

This sequence belongs to the alpha-IPM synthase/homocitrate synthase family. Homodimer.

The enzyme catalyses pyruvate + acetyl-CoA + H2O = (3R)-citramalate + CoA + H(+). It participates in amino-acid biosynthesis; L-isoleucine biosynthesis; 2-oxobutanoate from pyruvate: step 1/3. In terms of biological role, catalyzes the condensation of pyruvate and acetyl-coenzyme A to form (R)-citramalate. This Methanocaldococcus jannaschii (strain ATCC 43067 / DSM 2661 / JAL-1 / JCM 10045 / NBRC 100440) (Methanococcus jannaschii) protein is (R)-citramalate synthase CimA (cimA).